An 82-amino-acid chain; its full sequence is Splicing factor U2AF 35 kDa subunit (82 aa).

A2 is subject to N-acetylalanine. A C3H1-type zinc finger spans residues 12–40; the sequence is EKDKVNCSFYFKIGACRHGDRCSRLHNKP. Position 39 is an N6-methyllysine (K39). Positions 65–82 constitute an RRM domain; sequence SHCHVSDVEVQEHYDNFF.

The protein belongs to the splicing factor SR family. As to quaternary structure, identified in the spliceosome C complex. Heterodimer with U2AF2. Interacts (via RS domain) with PHF5A (via N-terminus). Interacts with ZRANB2. Interacts with SDE2. Interacts with SF3B1.

It localises to the nucleus. The protein resides in the nucleus speckle. Functionally, plays a critical role in both constitutive and enhancer-dependent splicing by mediating protein-protein interactions and protein-RNA interactions required for accurate 3'-splice site selection. Recruits U2 snRNP to the branch point. Directly mediates interactions between U2AF2 and proteins bound to the enhancers and thus may function as a bridge between U2AF2 and the enhancer complex to recruit it to the adjacent intron. This chain is Splicing factor U2AF 35 kDa subunit (U2AF1), found in Sus scrofa (Pig).